The following is a 134-amino-acid chain: Small ribosomal subunit protein bS16 (134 aa).

The tract at residues Gly80–Glu134 is disordered. Residues Ala115–Glu134 show a composition bias toward low complexity.

This sequence belongs to the bacterial ribosomal protein bS16 family.

This is Small ribosomal subunit protein bS16 from Brucella anthropi (strain ATCC 49188 / DSM 6882 / CCUG 24695 / JCM 21032 / LMG 3331 / NBRC 15819 / NCTC 12168 / Alc 37) (Ochrobactrum anthropi).